We begin with the raw amino-acid sequence, 584 residues long: Segmentation polarity homeobox protein engrailed (584 aa).

5 disordered regions span residues 1 to 27 (MALEDRCSPQSAPSPPGCLPHSPPQQH), 141 to 198 (EESD…SKPS), 343 to 380 (IGQAQSTTPVTTPSSRPSQLASPPPASNASTISSSSST), 392 to 451 (CSSA…GGKN), and 465 to 492 (DRPSSGPRYRRPKQPKDKTNDEKRPRTA). The segment covering 12–23 (APSPPGCLPHSP) has biased composition (pro residues). The span at 160–174 (TEEDEEEDDDIDVDD) shows a compositional bias: acidic residues. The span at 189–198 (HQQSKQSKPS) shows a compositional bias: polar residues. Composition is skewed to low complexity over residues 348 to 380 (STTPVTTPSSRPSQLASPPPASNASTISSSSST) and 392 to 405 (CSSAASSLNSSPSS). Residues 478 to 489 (QPKDKTNDEKRP) show a composition bias toward basic and acidic residues. Positions 486–545 (EKRPRTAFSSEQLARLKREFNENRYLTERRRQQLSSELGLNEAQIKIWFQNKRAKIKKST) form a DNA-binding region, homeobox.

Belongs to the engrailed homeobox family.

Its subcellular location is the nucleus. This protein specifies the body segmentation pattern. It is required for the development of the central nervous system. Transcriptional regulator that repress activated promoters. The chain is Segmentation polarity homeobox protein engrailed (en) from Drosophila virilis (Fruit fly).